The following is a 380-amino-acid chain: 1-deoxy-D-xylulose 5-phosphate reductoisomerase (380 aa).

T9, G10, S11, V12, R36, and N117 together coordinate NADPH. K118 is a 1-deoxy-D-xylulose 5-phosphate binding site. E119 lines the NADPH pocket. A Mn(2+)-binding site is contributed by D139. 1-deoxy-D-xylulose 5-phosphate is bound by residues S140, E141, S165, and H188. Mn(2+) is bound at residue E141. Residue G194 participates in NADPH binding. 4 residues coordinate 1-deoxy-D-xylulose 5-phosphate: S201, N206, K207, and E210. E210 contributes to the Mn(2+) binding site.

It belongs to the DXR family. The cofactor is Mg(2+). Requires Mn(2+) as cofactor.

The enzyme catalyses 2-C-methyl-D-erythritol 4-phosphate + NADP(+) = 1-deoxy-D-xylulose 5-phosphate + NADPH + H(+). Its pathway is isoprenoid biosynthesis; isopentenyl diphosphate biosynthesis via DXP pathway; isopentenyl diphosphate from 1-deoxy-D-xylulose 5-phosphate: step 1/6. Its function is as follows. Catalyzes the NADPH-dependent rearrangement and reduction of 1-deoxy-D-xylulose-5-phosphate (DXP) to 2-C-methyl-D-erythritol 4-phosphate (MEP). The sequence is that of 1-deoxy-D-xylulose 5-phosphate reductoisomerase from Aquifex aeolicus (strain VF5).